Reading from the N-terminus, the 110-residue chain is Iron-sulfur cluster assembly protein CyaY (110 aa).

The protein belongs to the frataxin family.

Its function is as follows. Involved in iron-sulfur (Fe-S) cluster assembly. May act as a regulator of Fe-S biogenesis. The sequence is that of Iron-sulfur cluster assembly protein CyaY from Ectopseudomonas mendocina (strain ymp) (Pseudomonas mendocina).